A 105-amino-acid polypeptide reads, in one-letter code: CYIQNCPLGGKRAALDLDVRKCLPCGPGGKGRCFGPSICCGDELGCFVGTAEALRCQEENYLPSPCQSGQKPCGSGGRCAAAGICCSPDGCLADPSCHDEAAFSQ.

Residues Cys1 and Cys6 are joined by a disulfide bond. Position 9 is a glycine amide (Gly9). 7 disulfide bridges follow: Cys22–Cys66, Cys25–Cys39, Cys33–Cys56, Cys40–Cys46, Cys73–Cys85, Cys79–Cys97, and Cys86–Cys91.

It belongs to the vasopressin/oxytocin family. Interacts with oxytocin receptor (Ki=1.5 nM). Interacts with vasopressin V1aR/AVPR1A (Ki=37 nM), V1bR/AVPR1B (Ki=222 nM), and V2R/AVPR2 receptors (Ki=823 nM).

It localises to the secreted. Its function is as follows. Neurophysin 1 specifically binds oxytocin. Oxytocin causes contraction of the smooth muscle of the uterus and of the mammary gland. Acts by binding to oxytocin receptor (OXTR). The sequence is that of Oxytocin-neurophysin 1 (OXT) from Equus caballus (Horse).